The primary structure comprises 136 residues: Large ribosomal subunit protein bL12 (136 aa).

This sequence belongs to the bacterial ribosomal protein bL12 family. Homodimer. Part of the ribosomal stalk of the 50S ribosomal subunit. Forms a multimeric L10(L12)X complex, where L10 forms an elongated spine to which 2 to 4 L12 dimers bind in a sequential fashion. Binds GTP-bound translation factors.

Its function is as follows. Forms part of the ribosomal stalk which helps the ribosome interact with GTP-bound translation factors. Is thus essential for accurate translation. In Synechococcus sp. (strain JA-2-3B'a(2-13)) (Cyanobacteria bacterium Yellowstone B-Prime), this protein is Large ribosomal subunit protein bL12.